We begin with the raw amino-acid sequence, 174 residues long: Shikimate kinase 2 (174 aa).

12-17 (GCGKTT) provides a ligand contact to ATP. Mg(2+) contacts are provided by T16 and D32. Substrate is bound by residues D34, R58, and G79. The segment at 112–126 (QAAPEEDLRPTLTGK) is LID domain. R120 is an ATP binding site. R139 provides a ligand contact to substrate.

This sequence belongs to the shikimate kinase family. AroL subfamily. As to quaternary structure, monomer. It depends on Mg(2+) as a cofactor.

It localises to the cytoplasm. The catalysed reaction is shikimate + ATP = 3-phosphoshikimate + ADP + H(+). The protein operates within metabolic intermediate biosynthesis; chorismate biosynthesis; chorismate from D-erythrose 4-phosphate and phosphoenolpyruvate: step 5/7. Functionally, catalyzes the specific phosphorylation of the 3-hydroxyl group of shikimic acid using ATP as a cosubstrate. The polypeptide is Shikimate kinase 2 (Escherichia coli O81 (strain ED1a)).